A 60-amino-acid polypeptide reads, in one-letter code: Large ribosomal subunit protein uL30 (60 aa).

This sequence belongs to the universal ribosomal protein uL30 family. In terms of assembly, part of the 50S ribosomal subunit.

This Bacillus pumilus (strain SAFR-032) protein is Large ribosomal subunit protein uL30.